The primary structure comprises 100 residues: Putative ESAT-6-like protein Y (100 aa).

It belongs to the WXG100 family.

The polypeptide is Putative ESAT-6-like protein Y (Mycobacterium leprae (strain TN)).